Here is a 167-residue protein sequence, read N- to C-terminus: Large ribosomal subunit protein uL23 (167 aa).

The interval 1-118 is large ribosomal subunit protein uL23; that stretch reads MNVNEIIKGP…TEEKAKIAKK (118 aa). Disordered regions lie at residues 91–112 and 136–167; these read FEDESPQDQKDSETVSENTEEK and KQAELAKKDSETNENQEKRIENQTENQENSAN. 2 stretches are compositionally biased toward basic and acidic residues: residues 97 to 112 and 136 to 157; these read QDQKDSETVSENTEEK and KQAELAKKDSETNENQEKRIEN. A unknown region spans residues 119 to 167; sequence KAELEAKNKEIAEKLAKKQAELAKKDSETNENQEKRIENQTENQENSAN. The span at 158–167 shows a compositional bias: polar residues; sequence QTENQENSAN.

Belongs to the universal ribosomal protein uL23 family. Part of the 50S ribosomal subunit. Contacts protein L29, and trigger factor when it is bound to the ribosome.

Its function is as follows. One of the early assembly proteins it binds 23S rRNA. One of the proteins that surrounds the polypeptide exit tunnel on the outside of the ribosome. Forms the main docking site for trigger factor binding to the ribosome. The chain is Large ribosomal subunit protein uL23 from Mesomycoplasma hyopneumoniae (strain J / ATCC 25934 / NCTC 10110) (Mycoplasma hyopneumoniae).